A 343-amino-acid chain; its full sequence is Multidrug resistance protein MdtN (343 aa).

Residues 1–12 lie on the Cytoplasmic side of the membrane; the sequence is MESTPKKAPRSK. The helical; Signal-anchor for type II membrane protein transmembrane segment at 13 to 33 threads the bilayer; it reads FPALLVVALALVALVFVIWRV. Residues 34–343 lie on the Periplasmic side of the membrane; it reads DSAPSTNDAY…ASAVANLEPQ (310 aa).

This sequence belongs to the membrane fusion protein (MFP) (TC 8.A.1) family. As to quaternary structure, could be part of a tripartite efflux system composed of MdtN, MdtO and MdtP.

It localises to the cell inner membrane. Its function is as follows. Could be involved in resistance to puromycin, acriflavine and tetraphenylarsonium chloride. In Shigella flexneri, this protein is Multidrug resistance protein MdtN (mdtN).